Consider the following 425-residue polypeptide: Formyl-CoA:oxalate CoA-transferase (425 aa).

CoA is bound by residues Q17–S18, R38, L72–K75, N96–G98, R104, and K136–E139. D168 serves as the catalytic Nucleophile. G247–Q249 contributes to the substrate binding site.

Belongs to the CoA-transferase III family. Frc subfamily. As to quaternary structure, homodimer.

The enzyme catalyses formyl-CoA + oxalate = oxalyl-CoA + formate. It participates in metabolic intermediate degradation; oxalate degradation; CO(2) and formate from oxalate: step 1/2. In terms of biological role, involved in the catabolism of oxalate and in the adapatation to low pH via the induction of the oxalate-dependent acid tolerance response (ATR). Catalyzes the transfer of the CoA moiety from formyl-CoA to oxalate. The polypeptide is Formyl-CoA:oxalate CoA-transferase (Rhodopseudomonas palustris (strain TIE-1)).